The following is a 276-amino-acid chain: NH(3)-dependent NAD(+) synthetase (276 aa).

43 to 50 (GISGGVDS) is an ATP binding site. D49 is a binding site for Mg(2+). R146 contributes to the deamido-NAD(+) binding site. T166 lines the ATP pocket. E171 lines the Mg(2+) pocket. K179 and D186 together coordinate deamido-NAD(+). ATP-binding residues include K195 and T217. 266-267 (HK) is a deamido-NAD(+) binding site.

It belongs to the NAD synthetase family. In terms of assembly, homodimer.

It carries out the reaction deamido-NAD(+) + NH4(+) + ATP = AMP + diphosphate + NAD(+) + H(+). It functions in the pathway cofactor biosynthesis; NAD(+) biosynthesis; NAD(+) from deamido-NAD(+) (ammonia route): step 1/1. Its function is as follows. Catalyzes the ATP-dependent amidation of deamido-NAD to form NAD. Uses ammonia as a nitrogen source. This chain is NH(3)-dependent NAD(+) synthetase, found in Shewanella baltica (strain OS185).